Reading from the N-terminus, the 122-residue chain is Ribonuclease P protein component (122 aa).

It belongs to the RnpA family. As to quaternary structure, consists of a catalytic RNA component (M1 or rnpB) and a protein subunit.

The catalysed reaction is Endonucleolytic cleavage of RNA, removing 5'-extranucleotides from tRNA precursor.. Its function is as follows. RNaseP catalyzes the removal of the 5'-leader sequence from pre-tRNA to produce the mature 5'-terminus. It can also cleave other RNA substrates such as 4.5S RNA. The protein component plays an auxiliary but essential role in vivo by binding to the 5'-leader sequence and broadening the substrate specificity of the ribozyme. The chain is Ribonuclease P protein component from Synechococcus elongatus (strain ATCC 33912 / PCC 7942 / FACHB-805) (Anacystis nidulans R2).